A 232-amino-acid polypeptide reads, in one-letter code: Ribonuclease 3 (232 aa).

Residues 5 to 134 enclose the RNase III domain; that stretch reads QTVLKNHFEI…FLGALLLDKD (130 aa). Residue Glu-47 coordinates Mg(2+). The active site involves Asp-51. Residues Asp-120 and Glu-123 each coordinate Mg(2+). Residue Glu-123 is part of the active site. Positions 160–229 constitute a DRBM domain; it reads DYKTHLQELL…AKNAVEKGLD (70 aa).

This sequence belongs to the ribonuclease III family. In terms of assembly, homodimer. It depends on Mg(2+) as a cofactor.

The protein localises to the cytoplasm. The catalysed reaction is Endonucleolytic cleavage to 5'-phosphomonoester.. In terms of biological role, digests double-stranded RNA. Involved in the processing of primary rRNA transcript to yield the immediate precursors to the large and small rRNAs (23S and 16S). Processes some mRNAs, and tRNAs when they are encoded in the rRNA operon. Processes pre-crRNA and tracrRNA of type II CRISPR loci if present in the organism. The protein is Ribonuclease 3 of Streptococcus pneumoniae (strain ATCC BAA-255 / R6).